Consider the following 354-residue polypeptide: Uroporphyrinogen decarboxylase (354 aa).

Substrate is bound by residues 25–29 (RQAGR), phenylalanine 44, aspartate 75, tyrosine 152, threonine 207, and histidine 330.

This sequence belongs to the uroporphyrinogen decarboxylase family. As to quaternary structure, homodimer.

The protein resides in the cytoplasm. It carries out the reaction uroporphyrinogen III + 4 H(+) = coproporphyrinogen III + 4 CO2. The protein operates within porphyrin-containing compound metabolism; protoporphyrin-IX biosynthesis; coproporphyrinogen-III from 5-aminolevulinate: step 4/4. Its function is as follows. Catalyzes the decarboxylation of four acetate groups of uroporphyrinogen-III to yield coproporphyrinogen-III. In Xylella fastidiosa (strain Temecula1 / ATCC 700964), this protein is Uroporphyrinogen decarboxylase.